We begin with the raw amino-acid sequence, 550 residues long: Mitochondrial distribution and morphology protein 12 (550 aa).

The region spanning 1-550 (MSIELNWETL…VYPSFWTFLV (550 aa)) is the SMP-LTD domain. 3 disordered regions span residues 62-168 (ITDP…PQDL), 218-356 (PPQW…TKYR), and 474-493 (TLASPAGAAPGSDEKAGGNT). The segment covering 69 to 90 (FYEEDPDVDYDDEDEDVEETHD) has biased composition (acidic residues). Low complexity predominate over residues 125-140 (VASSSSSSVGRGSAPR). Composition is skewed to polar residues over residues 148-157 (PTKSNININT), 251-269 (PSHSRTSSTVSNADLQTAS), 278-289 (TPTSFLRSGQQT), and 296-323 (VSTLAPTSVGTSRPPTRDLTTTMSTAQE).

It belongs to the MDM12 family. Component of the ER-mitochondria encounter structure (ERMES) or MDM complex, composed of MMM1, MDM10, MDM12 and MDM34. An MMM1 homodimer associates with one molecule of MDM12 on each side in a pairwise head-to-tail manner, and the SMP-LTD domains of MMM1 and MDM12 generate a continuous hydrophobic tunnel for phospholipid trafficking.

Its subcellular location is the mitochondrion outer membrane. The protein localises to the endoplasmic reticulum membrane. In terms of biological role, component of the ERMES/MDM complex, which serves as a molecular tether to connect the endoplasmic reticulum (ER) and mitochondria. Components of this complex are involved in the control of mitochondrial shape and protein biogenesis, and function in nonvesicular lipid trafficking between the ER and mitochondria. MDM12 is required for the interaction of the ER-resident membrane protein MMM1 and the outer mitochondrial membrane-resident beta-barrel protein MDM10. The MDM12-MMM1 subcomplex functions in the major beta-barrel assembly pathway that is responsible for biogenesis of all mitochondrial outer membrane beta-barrel proteins, and acts in a late step after the SAM complex. The MDM10-MDM12-MMM1 subcomplex further acts in the TOM40-specific pathway after the action of the MDM12-MMM1 complex. Essential for establishing and maintaining the structure of mitochondria and maintenance of mtDNA nucleoids. In Pyricularia oryzae (strain 70-15 / ATCC MYA-4617 / FGSC 8958) (Rice blast fungus), this protein is Mitochondrial distribution and morphology protein 12.